The chain runs to 287 residues: Probable endonuclease 4 (287 aa).

Zn(2+)-binding residues include His-69, His-109, Glu-146, Asp-180, His-183, His-217, Asp-230, His-232, and Glu-262.

This sequence belongs to the AP endonuclease 2 family. Requires Zn(2+) as cofactor.

The catalysed reaction is Endonucleolytic cleavage to 5'-phosphooligonucleotide end-products.. Endonuclease IV plays a role in DNA repair. It cleaves phosphodiester bonds at apurinic or apyrimidinic (AP) sites, generating a 3'-hydroxyl group and a 5'-terminal sugar phosphate. The protein is Probable endonuclease 4 of Petrotoga mobilis (strain DSM 10674 / SJ95).